Consider the following 122-residue polypeptide: Large ribosomal subunit protein bL12 (122 aa).

This sequence belongs to the bacterial ribosomal protein bL12 family. As to quaternary structure, homodimer. Part of the ribosomal stalk of the 50S ribosomal subunit. Forms a multimeric L10(L12)X complex, where L10 forms an elongated spine to which 2 to 4 L12 dimers bind in a sequential fashion. Binds GTP-bound translation factors.

Its function is as follows. Forms part of the ribosomal stalk which helps the ribosome interact with GTP-bound translation factors. Is thus essential for accurate translation. The chain is Large ribosomal subunit protein bL12 from Latilactobacillus sakei subsp. sakei (strain 23K) (Lactobacillus sakei subsp. sakei).